We begin with the raw amino-acid sequence, 195 residues long: MQEAALLVLCYLLGSIPFSYFFTRMLTRQDIRKRGSGNVGATNVFRTSGPGVALLAFLGDLLKGLLAAWIGQSTGSQLLLVICVILAVIGHIYPVFLGFKGGKGVTTSAGIILFLMPDVTGILLLIFLAIVYFTRYVSLGSITVACLLPLVSLAMGKPWSYVVIGILMAALVVYHHRENIDRLRNGSEAKITDKA.

Helical transmembrane passes span 3-23, 51-71, 79-99, 111-131, and 153-173; these read EAALLVLCYLLGSIPFSYFFT, GVALLAFLGDLLKGLLAAWIG, LLVICVILAVIGHIYPVFLGF, IILFLMPDVTGILLLIFLAIV, and LAMGKPWSYVVIGILMAALVV.

This sequence belongs to the PlsY family. Probably interacts with PlsX.

The protein resides in the cell membrane. The catalysed reaction is an acyl phosphate + sn-glycerol 3-phosphate = a 1-acyl-sn-glycero-3-phosphate + phosphate. It functions in the pathway lipid metabolism; phospholipid metabolism. Catalyzes the transfer of an acyl group from acyl-phosphate (acyl-PO(4)) to glycerol-3-phosphate (G3P) to form lysophosphatidic acid (LPA). This enzyme utilizes acyl-phosphate as fatty acyl donor, but not acyl-CoA or acyl-ACP. The protein is Glycerol-3-phosphate acyltransferase of Syntrophomonas wolfei subsp. wolfei (strain DSM 2245B / Goettingen).